The chain runs to 373 residues: Histidinol-phosphate aminotransferase (373 aa).

Residue K230 is modified to N6-(pyridoxal phosphate)lysine.

Belongs to the class-II pyridoxal-phosphate-dependent aminotransferase family. Histidinol-phosphate aminotransferase subfamily. As to quaternary structure, homodimer. Requires pyridoxal 5'-phosphate as cofactor.

The enzyme catalyses L-histidinol phosphate + 2-oxoglutarate = 3-(imidazol-4-yl)-2-oxopropyl phosphate + L-glutamate. It functions in the pathway amino-acid biosynthesis; L-histidine biosynthesis; L-histidine from 5-phospho-alpha-D-ribose 1-diphosphate: step 7/9. This chain is Histidinol-phosphate aminotransferase, found in Synechococcus elongatus (strain ATCC 33912 / PCC 7942 / FACHB-805) (Anacystis nidulans R2).